Here is a 330-residue protein sequence, read N- to C-terminus: MGNCLYPVADDNSTKLAIKEDFLIDFPEDYYPDYNETDVEAAAPCHSCSLLNYSSLPFFILVSILGILASGTILYALLRPLFRWQLYQDRSTLVQLAVGSALFSIVVPILARGLSGALITSLCHLAHLVAYGSAFAQALLIGYHACLGPQLGAGQVPGLRLGVTVGLWGVAALLSLPVVLGSDTSQGLCTVTFSGEWETLRYIHAAACFAIFVLLPLGLLGTKGLKTVLGRAPCPWVDVLWVWFIFWWPQGMTLGLDSLVRSKAIVVSTCPAQQALDMLLDVAEALAILHCVATPLLLAWVCYQATHTSPPSLPLPTTQTSHLDTLGGKS.

The Extracellular segment spans residues 1-57 (MGNCLYPVADDNSTKLAIKEDFLIDFPEDYYPDYNETDVEAAAPCHSCSLLNYSSLP). N-linked (GlcNAc...) asparagine glycans are attached at residues Asn-12, Asn-35, and Asn-52. 2 disulfides stabilise this stretch: Cys-45-Cys-270 and Cys-123-Cys-189. Residues 58–78 (FFILVSILGILASGTILYALL) form a helical membrane-spanning segment. At 79 to 89 (RPLFRWQLYQD) the chain is on the cytoplasmic side. The helical transmembrane segment at 90 to 110 (RSTLVQLAVGSALFSIVVPIL) threads the bilayer. At 111 to 123 (ARGLSGALITSLC) the chain is on the extracellular side. The helical transmembrane segment at 124–147 (HLAHLVAYGSAFAQALLIGYHACL) threads the bilayer. Residues 148 to 160 (GPQLGAGQVPGLR) are Cytoplasmic-facing. A helical transmembrane segment spans residues 161-181 (LGVTVGLWGVAALLSLPVVLG). Residues 182-201 (SDTSQGLCTVTFSGEWETLR) lie on the Extracellular side of the membrane. Residues 202 to 222 (YIHAAACFAIFVLLPLGLLGT) traverse the membrane as a helical segment. Topologically, residues 223-238 (KGLKTVLGRAPCPWVD) are cytoplasmic. Residues 239–259 (VLWVWFIFWWPQGMTLGLDSL) form a helical membrane-spanning segment. The Extracellular segment spans residues 260 to 281 (VRSKAIVVSTCPAQQALDMLLD). Residues 282-302 (VAEALAILHCVATPLLLAWVC) form a helical membrane-spanning segment. At 303-330 (YQATHTSPPSLPLPTTQTSHLDTLGGKS) the chain is on the cytoplasmic side.

Belongs to the G-protein coupled receptor 1 family. Atypical chemokine receptor subfamily.

Its subcellular location is the early endosome. The protein resides in the recycling endosome. It is found in the membrane. Its function is as follows. Atypical chemokine receptor that controls chemokine levels and localization via high-affinity chemokine binding that is uncoupled from classic ligand-driven signal transduction cascades, resulting instead in chemokine sequestration, degradation, or transcytosis. Also known as interceptor (internalizing receptor) or chemokine-scavenging receptor or chemokine decoy receptor. Has a promiscuous chemokine-binding profile, interacting with inflammatory chemokines of both the CXC and the CC subfamilies but not with homeostatic chemokines. Acts as a receptor for chemokines including CCL2, CCL5, CCL7, CCL11, CCL13, CCL14, CCL17, CXCL5, CXCL6, IL8/CXCL8, CXCL11, GRO, RANTES, MCP-1 and TARC. May regulate chemokine bioavailability and, consequently, leukocyte recruitment through two distinct mechanisms: when expressed in endothelial cells, it sustains the abluminal to luminal transcytosis of tissue-derived chemokines and their subsequent presentation to circulating leukocytes; when expressed in erythrocytes, serves as blood reservoir of cognate chemokines but also as a chemokine sink, buffering potential surges in plasma chemokine levels. The polypeptide is Atypical chemokine receptor 1 (ACKR1) (Bos taurus (Bovine)).